The sequence spans 430 residues: Microtubule-associated protein tau (430 aa).

Residues 1 to 16 are compositionally biased toward basic and acidic residues; it reads MAEPRQEFDTAEDHAE. A disordered region spans residues 1-245; sequence MAEPRQEFDT…PVPMPDLKNV (245 aa). N-acetylalanine is present on A2. At Y18 the chain carries Phosphotyrosine. K31 is covalently cross-linked (Glycyl lysine isopeptide (Lys-Gly) (interchain with G-Cter in ubiquitin)). Phosphoserine occurs at positions 33 and 48. A compositionally biased stretch (polar residues) spans 48–58; that stretch reads SETSDAKSTPT. A phosphothreonine mark is found at T56, T58, and T98. Residues 117–133 show a composition bias toward basic and acidic residues; sequence KGKEGTGSEDRKAKGAD. T142 bears the Phosphothreonine mark. Position 144 is an omega-N-methylarginine (R144). Residue K152 is modified to N6,N6-dimethyllysine; alternate. K152 is subject to N6-acetyllysine; alternate. T158, T164, T165, and T170 each carry phosphothreonine. Over residues 161–203 the composition is skewed to low complexity; that stretch reads PAKTTPSPKTPPGTGEPAKSGDRSGYSSPGSPGTPGSRSRTPS. A phosphoserine mark is found at S180 and S184. A Phosphotyrosine modification is found at Y186. A phosphoserine mark is found at S187, S188, and S191. Phosphothreonine occurs at positions 194 and 201. The residue at position 203 (S203) is a Phosphoserine. T206 is modified (phosphothreonine). K214 is modified (N6-acetyllysine). Phosphothreonine is present on T220. Phosphoserine occurs at positions 224 and 226. 4 Tau/MAP repeats span residues 233 to 263, 264 to 294, 295 to 325, and 326 to 357; these read QTAP…GGGK, VQII…GGGS, VQIV…GGGQ, and VEVK…GGGN. A Glycyl lysine isopeptide (Lys-Gly) (interchain with G-Cter in ubiquitin) cross-link involves residue K243. K248 carries the post-translational modification N6-acetyllysine; alternate. Position 248 is an N6-methyllysine; alternate (K248). A Glycyl lysine isopeptide (Lys-Gly) (interchain with G-Cter in ubiquitin); alternate cross-link involves residue K248. A Phosphoserine modification is found at S251. K256 participates in a covalent cross-link: Glycyl lysine isopeptide (Lys-Gly) (interchain with G-Cter in ubiquitin). K270 carries the post-translational modification N6-acetyllysine; alternate. A Glycyl lysine isopeptide (Lys-Gly) (interchain with G-Cter in ubiquitin); alternate cross-link involves residue K270. A phosphoserine mark is found at S274 and S278. The residue at position 279 (K279) is an N6-acetyllysine. The cysteines at positions 280 and 311 are disulfide-linked. S282 carries the post-translational modification Phosphoserine. N6-acetyllysine; alternate is present on K287. Residue K287 forms a Glycyl lysine isopeptide (Lys-Gly) (interchain with G-Cter in ubiquitin); alternate linkage. A Phosphoserine modification is found at S294. K300 is subject to N6,N6-dimethyllysine; alternate. Residues K300, K306, and K310 each carry the N6-acetyllysine; alternate modification. Glycyl lysine isopeptide (Lys-Gly) (interchain with G-Cter in ubiquitin); alternate cross-links involve residues K300, K306, and K310. A Phosphoserine modification is found at S313. 3 positions are modified to N6-acetyllysine; alternate: K320, K332, and K336. Residues K320, K332, and K336 each participate in a glycyl lysine isopeptide (Lys-Gly) (interchain with G-Cter in ubiquitin); alternate cross-link. R338 is modified (omega-N-methylarginine). Residue S341 is modified to Phosphoserine. A Glycyl lysine isopeptide (Lys-Gly) (interchain with G-Cter in ubiquitin) cross-link involves residue K342. S345 carries the post-translational modification Phosphoserine. K358 bears the N6-acetyllysine; alternate mark. K358 is covalently cross-linked (Glycyl lysine isopeptide (Lys-Gly) (interchain with G-Cter in ubiquitin); alternate). Residue K364 forms a Glycyl lysine isopeptide (Lys-Gly) (interchain with G-Cter in ubiquitin) linkage. K374 carries the post-translational modification N6-acetyllysine; alternate. K374 participates in a covalent cross-link: Glycyl lysine isopeptide (Lys-Gly) (interchain with G-Cter in ubiquitin); alternate. Y383 bears the Phosphotyrosine mark. A phosphoserine mark is found at S385 and S389. Residues 387 to 406 are disordered; it reads VVSGDTSPRHLSNVSSTGSI. Residues 390–406 show a composition bias toward polar residues; it reads GDTSPRHLSNVSSTGSI. T392 bears the Phosphothreonine mark. S393, S398, S405, and S411 each carry phosphoserine. Phosphothreonine is present on T416.

Interacts with MARK1, MARK2, MARK3 and MARK4. Interacts with SQSTM1 when polyubiquitinated. Interacts with PSMC2 through SQSTM1. Interacts with FKBP4. Binds to CSNK1D. Interacts with SGK1. Interacts with PIN1. Interacts with LRRK2. Interacts with LRP1, leading to endocytosis; this interaction is reduced in the presence of LRPAP1/RAP. Polyubiquitinated. Requires functional TRAF6 and may provoke SQSTM1-dependent degradation by the proteasome. Post-translationally, phosphorylation at various serine and threonine residues in S-P or T-P motifs by proline-directed protein kinases (PDPK1, CDK1, CDK5, GSK3, MAPK) (a few sites per protein in interphase, more in mitosis), and at serine residues in K-X-G-S motifs by MAP/microtubule affinity-regulating kinase (MARK1, MARK2, MARK3 or MARK4), causing detachment from microtubules, and their disassembly. Phosphorylation at Ser-345 by BRSK1 and BRSK2 in neurons affects ability to bind microtubules and plays a role in neuron polarization. Phosphorylated by PHK. Dephosphorylation at several serine and threonine residues by the serine/threonine phosphatase PPP5C. In terms of processing, hyperphosphorylated (in particular at Thr-170, Ser-191, Thr-194, Ser-251, and Ser-345) during hibernation. Phosphorylation is fully reversible after arousal. Highly phosphorylated tau contains a number of paired helical filaments (PHFs)-like epitopes. PHF-like phosphorylation is not associated with fibril formation. Distribution of PHF-like tau is more intense in the entorhinal cortex, hippocampus and isocortical areas. PHF-like phosphorylation-dephosphorylation during hibernation cycle is synchronized with regression-re-establishment of afferentation. It may reflect a protective mechanism in an unfavorable environment.

It is found in the cytoplasm. The protein resides in the cytosol. It localises to the cell membrane. The protein localises to the cytoskeleton. Its subcellular location is the cell projection. It is found in the axon. The protein resides in the dendrite. Promotes microtubule assembly and stability, and might be involved in the establishment and maintenance of neuronal polarity. The C-terminus binds axonal microtubules while the N-terminus binds neural plasma membrane components, suggesting that tau functions as a linker protein between both. Axonal polarity is predetermined by tau localization (in the neuronal cell) in the domain of the cell body defined by the centrosome. The short isoforms allow plasticity of the cytoskeleton whereas the longer isoforms may preferentially play a role in its stabilization. The polypeptide is Microtubule-associated protein tau (MAPT) (Spermophilus citellus (European ground squirrel)).